The sequence spans 167 residues: Peptide deformylase (167 aa).

Residues Cys-91 and His-133 each coordinate Fe cation. Glu-134 is a catalytic residue. His-137 provides a ligand contact to Fe cation.

The protein belongs to the polypeptide deformylase family. Fe(2+) is required as a cofactor.

The catalysed reaction is N-terminal N-formyl-L-methionyl-[peptide] + H2O = N-terminal L-methionyl-[peptide] + formate. In terms of biological role, removes the formyl group from the N-terminal Met of newly synthesized proteins. Requires at least a dipeptide for an efficient rate of reaction. N-terminal L-methionine is a prerequisite for activity but the enzyme has broad specificity at other positions. The chain is Peptide deformylase from Chromobacterium violaceum (strain ATCC 12472 / DSM 30191 / JCM 1249 / CCUG 213 / NBRC 12614 / NCIMB 9131 / NCTC 9757 / MK).